We begin with the raw amino-acid sequence, 265 residues long: Tetrapyrrole-binding protein, chloroplastic (265 aa).

The tract at residues 1–24 is disordered; that stretch reads MATTNSLHHHHHSSPSYTHHRNNL. Residues 1 to 69 constitute a chloroplast transit peptide; the sequence is MATTNSLHHH…TAVSAVSTTN (69 aa). A compositionally biased stretch (basic residues) spans 7–23; the sequence is LHHHHHSSPSYTHHRNN.

In terms of assembly, interacts with CHLH, the protoporphyrin IX-binding subunit of Mg-chelatase. Monomer or extremely compact dimer.

It localises to the plastid. Its subcellular location is the chloroplast membrane. Functionally, regulates chlorophyll synthesis and plastid-to-nucleus signal transduction by binding both the product and the substrate of Mg-chelatase, an enzyme that produces magnesium-protoporphyrin IX (Mg-Proto). Also activates Mg-chelatase. Neither binds abscisic acid (ABA) nor is involved in ABA signaling. The sequence is that of Tetrapyrrole-binding protein, chloroplastic (GUN4) from Arabidopsis thaliana (Mouse-ear cress).